The primary structure comprises 156 residues: 3-hydroxyacyl-[acyl-carrier-protein] dehydratase FabZ (156 aa).

Residue H61 is part of the active site.

The protein belongs to the thioester dehydratase family. FabZ subfamily.

The protein resides in the cytoplasm. It catalyses the reaction a (3R)-hydroxyacyl-[ACP] = a (2E)-enoyl-[ACP] + H2O. Functionally, involved in unsaturated fatty acids biosynthesis. Catalyzes the dehydration of short chain beta-hydroxyacyl-ACPs and long chain saturated and unsaturated beta-hydroxyacyl-ACPs. The chain is 3-hydroxyacyl-[acyl-carrier-protein] dehydratase FabZ from Acaryochloris marina (strain MBIC 11017).